The chain runs to 187 residues: MSLINTKIKPFKNQAFKNGEFIEVTEKDTEGRWSVFFFYPADFTFVCPTELGDVADHYEELQKLGVDVYSVSTDTHFTHKAWHSSSETIAKIKYAMIGDPTGALTRNFDNMREDEGLADRATFVVDPQGIIQAIEVTAEGIGRDASDLLRKIKAAQYVAAHPGEVCPAKWKEGEATLAPSLDLVGKI.

The Thioredoxin domain occupies 2 to 157 (SLINTKIKPF…LLRKIKAAQY (156 aa)). Cys47 serves as the catalytic Cysteine sulfenic acid (-SOH) intermediate.

Belongs to the peroxiredoxin family. AhpC/Prx1 subfamily. Homodimer; disulfide-linked, upon oxidation. 5 homodimers assemble to form a ring-like decamer.

It is found in the cytoplasm. It catalyses the reaction a hydroperoxide + NADH + H(+) = an alcohol + NAD(+) + H2O. Thiol-specific peroxidase that catalyzes the reduction of hydrogen peroxide and organic hydroperoxides to water and alcohols, respectively. Plays a role in cell protection against oxidative stress by detoxifying peroxides. In Salmonella typhi, this protein is Alkyl hydroperoxide reductase C (ahpC).